A 312-amino-acid polypeptide reads, in one-letter code: Serine/threonine-protein kinase ppk11 (312 aa).

The Protein kinase domain occupies 6–258 (YRDLQLIGQG…AEYLSKHKFI (253 aa)). ATP-binding positions include 12–20 (IGQGSFGSV) and Lys35. Asp127 (proton acceptor) is an active-site residue.

This sequence belongs to the protein kinase superfamily. Ser/Thr protein kinase family.

The protein localises to the cytoplasm. It is found in the nucleus. The catalysed reaction is L-seryl-[protein] + ATP = O-phospho-L-seryl-[protein] + ADP + H(+). It carries out the reaction L-threonyl-[protein] + ATP = O-phospho-L-threonyl-[protein] + ADP + H(+). The sequence is that of Serine/threonine-protein kinase ppk11 (ppk11) from Schizosaccharomyces pombe (strain 972 / ATCC 24843) (Fission yeast).